Reading from the N-terminus, the 245-residue chain is 1-(5-phosphoribosyl)-5-[(5-phosphoribosylamino)methylideneamino] imidazole-4-carboxamide isomerase (245 aa).

Asp7 serves as the catalytic Proton acceptor. The Proton donor role is filled by Asp129.

The protein belongs to the HisA/HisF family.

It is found in the cytoplasm. It carries out the reaction 1-(5-phospho-beta-D-ribosyl)-5-[(5-phospho-beta-D-ribosylamino)methylideneamino]imidazole-4-carboxamide = 5-[(5-phospho-1-deoxy-D-ribulos-1-ylimino)methylamino]-1-(5-phospho-beta-D-ribosyl)imidazole-4-carboxamide. Its pathway is amino-acid biosynthesis; L-histidine biosynthesis; L-histidine from 5-phospho-alpha-D-ribose 1-diphosphate: step 4/9. The polypeptide is 1-(5-phosphoribosyl)-5-[(5-phosphoribosylamino)methylideneamino] imidazole-4-carboxamide isomerase (Alteromonas mediterranea (strain DSM 17117 / CIP 110805 / LMG 28347 / Deep ecotype)).